Consider the following 230-residue polypeptide: Ribonuclease 3 (230 aa).

Positions 10–133 (DPRLLSRIGY…IIGAIYLDSS (124 aa)) constitute an RNase III domain. E46 lines the Mg(2+) pocket. D50 is a catalytic residue. Mg(2+)-binding residues include D119 and E122. E122 is an active-site residue. Residues 161-230 (DPKSRLQEYL…AAEILKLLEQ (70 aa)) form the DRBM domain.

Belongs to the ribonuclease III family. In terms of assembly, homodimer. Mg(2+) is required as a cofactor.

It localises to the cytoplasm. It catalyses the reaction Endonucleolytic cleavage to 5'-phosphomonoester.. Its function is as follows. Digests double-stranded RNA. Involved in the processing of primary rRNA transcript to yield the immediate precursors to the large and small rRNAs (23S and 16S). Processes some mRNAs, and tRNAs when they are encoded in the rRNA operon. Processes pre-crRNA and tracrRNA of type II CRISPR loci if present in the organism. This is Ribonuclease 3 from Acinetobacter baumannii (strain SDF).